Here is an 860-residue protein sequence, read N- to C-terminus: MQEQYRPEEIESKVQLHWDEKRTFEVTEDESKEKYYCLSMLPYPSGRLHMGHVRNYTIGDVVARYQRMLGKNVLQPIGWDAFGLPAEGAAVKNNTAPAPWTYDNIAYMKNQLKTLGFGYDWSREIATCTPEYYRWEQKFFTELYKKGLVYKKTSAVNWCPNDQTVLANEQVIDGCCWRCDTKVERKEIPQWFIKITAYADELLRDLDKLDHWPDTVKTMQRNWIGRSEGVEITFDVKGYDNTLTVYTTRPDTFMGATYLAVAAGHPLAQKAAANNAELAAFIDECRNTKVAEAEMATMEKKGVDTGFKATHPLTGEEIPVWAANFVLMEYGTGAVMAVPGHDQRDYEFASKYGLTIKPVILAADGSEPDLSEQALTEKGVLFNSGEFDGLAFEAAFNAIADKLAEKGVGERKVNYRLRDWGVSRQRYWGAPIPMVTLEDGTVLPTPEDQLPVILPEDVVMDGITSPIKADPEWAKTTVNGMPALRETDTFDTFMESSWYYARYTCPQYQEGMLDSKAANYWLPVDIYIGGIEHAIMHLLYFRFFHKLMRDAGMVTSDEPAKQLLCQGMVLADAFYYVGENGERNWVSPVDAIVERDEKGRIVKAKDAAGHELVYTGMSKMSKSKNNGIDPQVMVERYGADTVRLFMMFASPADMTLEWQESGVEGANRFIKRVWKLVYEHTAKGPVAALNVDALSEDQKALRRDVHKTIAKVTDDIGRRQTFNTAIAAIMELMNKLAKAPQEGEQDRALLQEALQAVVRMLNPFTPHVCFTLWQELGGEGDIDNAPWPVADEQAMVENTTLVVVQVNGKVRGKITVAVDATEEQVRERAGQEHLVAKYLDGVTVRKVIYVPGKLLNLVVG.

Positions 42-52 (PYPSGRLHMGH) match the 'HIGH' region motif. A 'KMSKS' region motif is present at residues 619 to 623 (KMSKS). Lys622 contributes to the ATP binding site.

The protein belongs to the class-I aminoacyl-tRNA synthetase family.

It is found in the cytoplasm. It catalyses the reaction tRNA(Leu) + L-leucine + ATP = L-leucyl-tRNA(Leu) + AMP + diphosphate. This is Leucine--tRNA ligase from Salmonella enteritidis PT4 (strain P125109).